The following is a 221-amino-acid chain: CASP-like protein 2U10 (221 aa).

The disordered stretch occupies residues 1-22 (MDSSSKPMNGSAGGSPVGDERK). The Cytoplasmic segment spans residues 1–31 (MDSSSKPMNGSAGGSPVGDERKMGDHEHEFR). A helical transmembrane segment spans residues 32–52 (ISIILLRSFLLVLVIISEALM). The Extracellular portion of the chain corresponds to 53-91 (VTDRETGSVPLPFFGLPRPVFVTKTAKYELVTGLKFYVD). The helical transmembrane segment at 92–112 (ALGVVIGYTVLHLLFNIGLVA) threads the bilayer. At 113-122 (TKGTVVDCKS) the chain is on the cytoplasmic side. The chain crosses the membrane as a helical span at residues 123 to 143 (VAWISFIADSMMGYLLLSSAA). The Extracellular segment spans residues 144-174 (VATEIGYLAEEGAPAVLWRKVCNAFGYFCTV). The chain crosses the membrane as a helical span at residues 175 to 195 (YAISVVICFIAALVSFVVVGI). At 196 to 221 (SAYHLFRLYGIQQQAAREKEKLSAEM) the chain is on the cytoplasmic side.

This sequence belongs to the Casparian strip membrane proteins (CASP) family. As to quaternary structure, homodimer and heterodimers.

The protein resides in the cell membrane. This Selaginella moellendorffii (Spikemoss) protein is CASP-like protein 2U10.